Reading from the N-terminus, the 563-residue chain is Cytochrome b (563 aa).

The next 12 membrane-spanning stretches (helical) occupy residues 36 to 61, 81 to 104, 119 to 141, 193 to 220, 255 to 276, 326 to 345, 358 to 379, 387 to 409, 436 to 454, 458 to 476, 505 to 527, and 539 to 557; these read SYWL…LLYY, SVLL…HMFR, WVTG…SLVS, RLLG…ERYG, LSIV…ANIN, ILTI…LPFL, FWTW…WGYL, TSAQ…YLWP, ILLG…FNFI, TLIN…IYAL, IAFF…MWTL, and MDLG…LYHY. 2 residues coordinate heme: His87 and His101. 2 residues coordinate heme: His198 and His212.

Belongs to the cytochrome b family. It is a component of at least 2 distinct terminal oxidases, the quinol oxidase (SoxABC) and the alternate quinol oxidase with the core components SoxM and a Rieske Fe-S protein.

The protein resides in the cell membrane. In terms of biological role, binds 2 heme groups (b586 and b606) which are not covalently bound to the protein. The polypeptide is Cytochrome b (soxC) (Sulfolobus acidocaldarius (strain ATCC 33909 / DSM 639 / JCM 8929 / NBRC 15157 / NCIMB 11770)).